Here is a 504-residue protein sequence, read N- to C-terminus: Cytochrome P450 2K4 (504 aa).

Cysteine 447 lines the heme pocket.

Belongs to the cytochrome P450 family. It depends on heme as a cofactor.

The protein localises to the endoplasmic reticulum membrane. The protein resides in the microsome membrane. It carries out the reaction an organic molecule + reduced [NADPH--hemoprotein reductase] + O2 = an alcohol + oxidized [NADPH--hemoprotein reductase] + H2O + H(+). This is Cytochrome P450 2K4 (cyp2k4) from Oncorhynchus mykiss (Rainbow trout).